Here is a 387-residue protein sequence, read N- to C-terminus: Probable serine/threonine-protein kinase PBL18 (387 aa).

The tract at residues 1 to 37 (MGNCLDSSARVGNRESTFGGSSRISRKPNQSSRLSSL) is disordered. A lipid anchor (N-myristoyl glycine) is attached at G2. A lipid anchor (S-palmitoyl cysteine) is attached at C4. Positions 14-37 (RESTFGGSSRISRKPNQSSRLSSL) are enriched in polar residues. At T73 the chain carries Phosphothreonine. Residues 84–365 (FKPNSMIGEG…ADVLSTLQQL (282 aa)) form the Protein kinase domain. ATP is bound by residues 90 to 98 (IGEGGFGCV) and K122. Y167 carries the post-translational modification Phosphotyrosine. The active-site Proton acceptor is the D215. At S219 the chain carries Phosphoserine. Phosphothreonine is present on residues T250 and T255. Phosphotyrosine is present on Y263. The segment at 368–387 (SSKKMGSTQNIVMSPSSHMS) is disordered.

Belongs to the protein kinase superfamily. Ser/Thr protein kinase family.

Its subcellular location is the cell membrane. It catalyses the reaction L-seryl-[protein] + ATP = O-phospho-L-seryl-[protein] + ADP + H(+). It carries out the reaction L-threonyl-[protein] + ATP = O-phospho-L-threonyl-[protein] + ADP + H(+). May be involved in plant defense signaling. The chain is Probable serine/threonine-protein kinase PBL18 from Arabidopsis thaliana (Mouse-ear cress).